The following is a 130-amino-acid chain: Granulin (130 aa).

The first 26 residues, 1–26 (MNYSKIFIFGIISLILMALFSSTVES), serve as a signal peptide directing secretion. 2 cysteine pairs are disulfide-bonded: C67-C79 and C73-C89.

It belongs to the granulin family. In terms of processing, granulins are disulfide bridged.

The protein localises to the secreted. The protein is Granulin (grn) of Dictyostelium discoideum (Social amoeba).